Consider the following 283-residue polypeptide: Nucleotide-binding protein ABBFA_002973 (283 aa).

Residue 9–16 participates in ATP binding; that stretch reads GQSGSGKS. A GTP-binding site is contributed by 59-62; the sequence is DVRS.

It belongs to the RapZ-like family.

Functionally, displays ATPase and GTPase activities. This chain is Nucleotide-binding protein ABBFA_002973, found in Acinetobacter baumannii (strain AB307-0294).